A 336-amino-acid chain; its full sequence is Methionine synthase (336 aa).

Zn(2+) contacts are provided by His-210, Cys-212, Glu-234, and Cys-294.

Belongs to the archaeal MetE family. Zn(2+) serves as cofactor.

It functions in the pathway amino-acid biosynthesis; L-methionine biosynthesis via de novo pathway. Its function is as follows. Catalyzes the transfer of a methyl group to L-homocysteine resulting in methionine formation. The physiological methyl donor is unknown. The protein is Methionine synthase of Thermococcus kodakarensis (strain ATCC BAA-918 / JCM 12380 / KOD1) (Pyrococcus kodakaraensis (strain KOD1)).